The following is a 196-amino-acid chain: ECF RNA polymerase sigma factor SigK (196 aa).

Residues 39 to 105 (YDQTRARVYG…RAVDRVRSEQ (67 aa)) are sigma-70 factor domain-2. The short motif at 62–65 (ETTQ) is the Polymerase core binding element. The segment at 142–191 (CLDSLTDVQRECIQLAYYDGLTYAQVADRLAANLATIKSRMRDGIRALRK) is sigma-70 factor domain-4. The H-T-H motif DNA-binding region spans 164–183 (YAQVADRLAANLATIKSRMR).

The protein belongs to the sigma-70 factor family. ECF subfamily. Interacts transiently with the RNA polymerase catalytic core formed by RpoA, RpoB, RpoC and RpoZ (2 alpha, 1 beta, 1 beta' and 1 omega subunit) to form the RNA polymerase holoenzyme that can initiate transcription. Interacts (via sigma-70 factor domain 4) with anti-sigma-K factor RskA.

Sigma factors are initiation factors that promote the attachment of RNA polymerase to specific initiation sites and are then released. Extracytoplasmic function (ECF) sigma factors are held in an inactive form by an anti-sigma factor until released by regulated intramembrane proteolysis. In Mycolicibacterium vanbaalenii (strain DSM 7251 / JCM 13017 / BCRC 16820 / KCTC 9966 / NRRL B-24157 / PYR-1) (Mycobacterium vanbaalenii), this protein is ECF RNA polymerase sigma factor SigK (sigK).